The following is a 338-amino-acid chain: Phenylalanine--tRNA ligase alpha subunit (338 aa).

Residue Glu-253 coordinates Mg(2+).

Belongs to the class-II aminoacyl-tRNA synthetase family. Phe-tRNA synthetase alpha subunit type 1 subfamily. Tetramer of two alpha and two beta subunits. The cofactor is Mg(2+).

The protein resides in the cytoplasm. It catalyses the reaction tRNA(Phe) + L-phenylalanine + ATP = L-phenylalanyl-tRNA(Phe) + AMP + diphosphate + H(+). This is Phenylalanine--tRNA ligase alpha subunit from Pelobacter propionicus (strain DSM 2379 / NBRC 103807 / OttBd1).